Consider the following 742-residue polypeptide: Mechanosensitive ion channel protein 9 (742 aa).

A disordered region spans residues 1-117; the sequence is MAERRVSNGE…REENGGRSLR (117 aa). The segment covering 17–26 has biased composition (basic and acidic residues); it reads SDKEDSKDPR. Ser-28 and Ser-36 each carry phosphoserine. Residues 105–117 are compositionally biased toward basic and acidic residues; that stretch reads DSTREENGGRSLR. Phosphoserine occurs at positions 142 and 145. A run of 6 helical transmembrane segments spans residues 180–200, 221–241, 261–281, 292–312, 524–544, and 559–579; these read AFLE…SLTI, MVTL…VFII, NVQV…LFDG, FLDF…LFLV, LITG…LDIA, and LAFM…FVFV.

This sequence belongs to the MscS (TC 1.A.23) family. As to expression, detected in the epidermis, cortex, and endodermis of the root tip.

The protein resides in the cell membrane. In terms of biological role, mechanosensitive channel that opens in response to stretch forces in the membrane lipid bilayer. In Arabidopsis thaliana (Mouse-ear cress), this protein is Mechanosensitive ion channel protein 9 (MSL9).